We begin with the raw amino-acid sequence, 256 residues long: Trypsin, alkaline A (256 aa).

Positions 1 to 17 are cleaved as a signal peptide; sequence MRLFLALLALGFAAVAA. Residues 18–24 constitute a propeptide, activation peptide; it reads VPAYPQR. The Peptidase S1 domain maps to 25–256; it reads IVGGSTTTIQ…RFANWIRNNS (232 aa). An intrachain disulfide couples cysteine 55 to cysteine 71. Catalysis depends on charge relay system residues histidine 70 and aspartate 115. 2 disulfides stabilise this stretch: cysteine 180/cysteine 197 and cysteine 209/cysteine 233. Catalysis depends on serine 213, which acts as the Charge relay system.

The protein belongs to the peptidase S1 family. As to expression, midgut.

It is found in the secreted. The protein localises to the extracellular space. The enzyme catalyses Preferential cleavage: Arg-|-Xaa, Lys-|-Xaa.. In Manduca sexta (Tobacco hawkmoth), this protein is Trypsin, alkaline A.